The sequence spans 466 residues: UDP-N-acetylmuramoylalanine--D-glutamate ligase (466 aa).

An ATP-binding site is contributed by 121-127 (GTNGKST).

The protein belongs to the MurCDEF family.

Its subcellular location is the cytoplasm. It carries out the reaction UDP-N-acetyl-alpha-D-muramoyl-L-alanine + D-glutamate + ATP = UDP-N-acetyl-alpha-D-muramoyl-L-alanyl-D-glutamate + ADP + phosphate + H(+). Its pathway is cell wall biogenesis; peptidoglycan biosynthesis. Functionally, cell wall formation. Catalyzes the addition of glutamate to the nucleotide precursor UDP-N-acetylmuramoyl-L-alanine (UMA). The sequence is that of UDP-N-acetylmuramoylalanine--D-glutamate ligase from Mesorhizobium japonicum (strain LMG 29417 / CECT 9101 / MAFF 303099) (Mesorhizobium loti (strain MAFF 303099)).